A 199-amino-acid chain; its full sequence is Shikimate kinase (199 aa).

32 to 37 (GSGKTS) lines the ATP pocket. Mg(2+) is bound at residue threonine 36. 3 residues coordinate substrate: aspartate 54, arginine 78, and glycine 100. Residue arginine 138 coordinates ATP. Arginine 157 contacts substrate.

This sequence belongs to the shikimate kinase family. In terms of assembly, monomer. Mg(2+) is required as a cofactor.

It localises to the cytoplasm. The catalysed reaction is shikimate + ATP = 3-phosphoshikimate + ADP + H(+). Its pathway is metabolic intermediate biosynthesis; chorismate biosynthesis; chorismate from D-erythrose 4-phosphate and phosphoenolpyruvate: step 5/7. Its function is as follows. Catalyzes the specific phosphorylation of the 3-hydroxyl group of shikimic acid using ATP as a cosubstrate. The polypeptide is Shikimate kinase (Synechococcus sp. (strain CC9605)).